The chain runs to 369 residues: Cytochrome P450 monooxygenase apf8 (369 aa).

Position 303 (cysteine 303) interacts with heme.

This sequence belongs to the cytochrome P450 family. Requires heme as cofactor.

It participates in secondary metabolite biosynthesis. Functionally, cytochrome P450 monooxygenase; part of the gene cluster that mediates the biosynthesis of the cyclic tetrapeptide apicidin F (APF). The non-ribosomal peptide synthetase apf1 incorporates four different amino acids to produce apicidin F: L-phenylalanine, D-pipecolic acid (D-pip), N-methoxy-L-tryptophan and L-2-aminooctanedioic acid. L-Phenylalanine is the only proteinogenic amino acid directly used by apf1. The 3 other apf1 substrates are non-proteinogenic and have to be modified by other enzymes of the cluster. Lysine is converted to delta-1-pyrroline-5-carboxylate (P5C) which is reduced to L-pipecolic acid (L-pip) by apf3. L-pip is epimerized to D-pip, probably by apf1 activity, prior to incorporation. L-Tryptophan is N-oxidyzed by one of the cytochrome P450 monooxygenases (apf7 or apf8), and further methylated at the hydroxy group by the O-methyltransferase apf6 to yield N-methoxy-L-tryptophan. The synthesis of the fourth apf1 substrate is more complex. The fatty acid synthase apf5 is involved in the synthesis of the octanoic acid backbone of L-2-aminooctanedioic acid by fixing one acetyl-CoA unit and three malonyl-CoA units. Then one of the cytochrome P450 monooxygenases (apf7 or apf8) may oxidize this backbone to 2-oxooctanoic acid. The aminotransferase apf4 is predicted to catalyze the exchange of the keto group with an amino group. The next step would be the oxidation of 2-aminooctanoic acid by one of the cytochrome P450 monooxygenases (apf7 or apf8). The last step is the oxidation of 2-amino-8-hydroxyoctanoic acid to 2-aminooctanedioic acid is catalyzed by the FAD-dependent monooxygenase apf9. The sequence is that of Cytochrome P450 monooxygenase apf8 from Gibberella fujikuroi (strain CBS 195.34 / IMI 58289 / NRRL A-6831) (Bakanae and foot rot disease fungus).